A 344-amino-acid chain; its full sequence is RNA 3'-terminal phosphate cyclase (344 aa).

Residues Gln103 and 283–287 (HLADQ) contribute to the ATP site. His308 serves as the catalytic Tele-AMP-histidine intermediate.

The protein belongs to the RNA 3'-terminal cyclase family. Type 1 subfamily.

It is found in the cytoplasm. It catalyses the reaction a 3'-end 3'-phospho-ribonucleotide-RNA + ATP = a 3'-end 2',3'-cyclophospho-ribonucleotide-RNA + AMP + diphosphate. Functionally, catalyzes the conversion of 3'-phosphate to a 2',3'-cyclic phosphodiester at the end of RNA. The mechanism of action of the enzyme occurs in 3 steps: (A) adenylation of the enzyme by ATP; (B) transfer of adenylate to an RNA-N3'P to produce RNA-N3'PP5'A; (C) and attack of the adjacent 2'-hydroxyl on the 3'-phosphorus in the diester linkage to produce the cyclic end product. The biological role of this enzyme is unknown but it is likely to function in some aspects of cellular RNA processing. In Salmonella paratyphi C (strain RKS4594), this protein is RNA 3'-terminal phosphate cyclase.